Here is a 607-residue protein sequence, read N- to C-terminus: Polyphenol oxidase, chloroplastic (607 aa).

The N-terminal 103 residues, methionine 1–glycine 103, are a transit peptide targeting the chloroplast. The disordered stretch occupies residues arginine 39–glycine 73. Over residues valine 50 to threonine 64 the composition is skewed to polar residues. Disulfide bonds link cysteine 114-cysteine 129 and cysteine 128-cysteine 191. Residues histidine 190, histidine 211, histidine 220, histidine 342, histidine 346, and histidine 375 each contribute to the Cu cation site. Residues cysteine 194–histidine 211 constitute a cross-link (2'-(S-cysteinyl)-histidine (Cys-His)).

It belongs to the tyrosinase family. Cu(2+) serves as cofactor.

The protein localises to the plastid. The protein resides in the chloroplast thylakoid lumen. The catalysed reaction is 2 catechol + O2 = 2 1,2-benzoquinone + 2 H2O. Its function is as follows. Catalyzes the oxidation of mono- and o-diphenols to o-diquinones. The sequence is that of Polyphenol oxidase, chloroplastic from Vitis vinifera (Grape).